Reading from the N-terminus, the 347-residue chain is UDP-glucose 4-epimerase (347 aa).

Residues 11 to 13, 32 to 36, 65 to 66, Phe-87, and Lys-91 each bind NAD(+); these read GYI, DNFHN, and DI. 131–133 provides a ligand contact to substrate; sequence SAT. The active-site Proton acceptor is the Tyr-156. The NAD(+) site is built by Lys-160 and Tyr-184. Substrate is bound by residues 184 to 186, 205 to 207, 223 to 225, Arg-238, and 299 to 302; these read YFN, NNL, NVF, and REGD.

It belongs to the NAD(P)-dependent epimerase/dehydratase family. In terms of assembly, homodimer. NAD(+) is required as a cofactor.

The catalysed reaction is UDP-alpha-D-glucose = UDP-alpha-D-galactose. It carries out the reaction UDP-N-acetyl-alpha-D-glucosamine = UDP-N-acetyl-alpha-D-galactosamine. Its pathway is carbohydrate metabolism; galactose metabolism. Functionally, catalyzes two distinct but analogous reactions: the reversible epimerization of UDP-glucose to UDP-galactose and the reversible epimerization of UDP-N-acetylglucosamine to UDP-N-acetylgalactosamine. The reaction with UDP-Gal plays a critical role in the Leloir pathway of galactose catabolism in which galactose is converted to the glycolytic intermediate glucose 6-phosphate. It contributes to the catabolism of dietary galactose and enables the endogenous biosynthesis of both UDP-Gal and UDP-GalNAc when exogenous sources are limited. Both UDP-sugar interconversions are important in the synthesis of glycoproteins and glycolipids. The sequence is that of UDP-glucose 4-epimerase (Gale) from Mus musculus (Mouse).